The following is a 380-amino-acid chain: Erythronate-4-phosphate dehydrogenase (380 aa).

Ser45 and Thr66 together coordinate substrate. NAD(+) contacts are provided by residues 126–127, Asp146, Thr175, 206–208, and Asp232; these read QV and ASR. The active site involves Arg208. Glu237 is a catalytic residue. The Proton donor role is filled by His254. Residue Gly257 coordinates NAD(+). Residue Tyr258 participates in substrate binding.

Belongs to the D-isomer specific 2-hydroxyacid dehydrogenase family. PdxB subfamily. Homodimer.

It is found in the cytoplasm. It catalyses the reaction 4-phospho-D-erythronate + NAD(+) = (R)-3-hydroxy-2-oxo-4-phosphooxybutanoate + NADH + H(+). The protein operates within cofactor biosynthesis; pyridoxine 5'-phosphate biosynthesis; pyridoxine 5'-phosphate from D-erythrose 4-phosphate: step 2/5. Catalyzes the oxidation of erythronate-4-phosphate to 3-hydroxy-2-oxo-4-phosphonooxybutanoate. This chain is Erythronate-4-phosphate dehydrogenase, found in Pseudomonas aeruginosa (strain UCBPP-PA14).